The primary structure comprises 178 residues: Ribosome maturation factor RimP (178 aa).

Belongs to the RimP family.

The protein localises to the cytoplasm. Functionally, required for maturation of 30S ribosomal subunits. In Streptococcus pyogenes serotype M3 (strain ATCC BAA-595 / MGAS315), this protein is Ribosome maturation factor RimP.